Consider the following 209-residue polypeptide: MRSGQSSRTEPASLPWHPSGLVAGVDEAGRGPLAGPVMAAAVMLDERQPIMGLADSKKLTPARRASLFDEIRAKALCYSIAQASVQEIDALNILQATLLAMRRAVQGLRLRPALVLVDGNRLPRLDIPAQAIVKGDALQPAISAASILAKVQRDHWCVQVHAEFPQYGFAGHKGYGTAMHLAALRAHGACIHHRRSFAPVARSLPGACR.

An RNase H type-2 domain is found at 20–209; that stretch reads GLVAGVDEAG…VARSLPGACR (190 aa). Residues Asp-26, Glu-27, and Asp-118 each coordinate a divalent metal cation.

Belongs to the RNase HII family. Mn(2+) is required as a cofactor. The cofactor is Mg(2+).

The protein localises to the cytoplasm. The catalysed reaction is Endonucleolytic cleavage to 5'-phosphomonoester.. In terms of biological role, endonuclease that specifically degrades the RNA of RNA-DNA hybrids. The sequence is that of Ribonuclease HII from Verminephrobacter eiseniae (strain EF01-2).